The chain runs to 347 residues: uncharacterized protein (347 aa).

The Cytoplasmic portion of the chain corresponds to 1–44 (MWNPKKKSEALAKFKSFPYPKPGTSNVLDSKEGDTRRKYFTKTH). The chain crosses the membrane as a helical; Signal-anchor for type II membrane protein span at residues 45 to 62 (LHRLFVFVVLLLCSGYFL). At 63–347 (KHTLLTRPKE…RGWRKLVPFL (285 aa)) the chain is on the lumenal side.

It belongs to the glycosyltransferase 34 family.

The protein localises to the endoplasmic reticulum membrane. This is an uncharacterized protein from Schizosaccharomyces pombe (strain 972 / ATCC 24843) (Fission yeast).